The primary structure comprises 200 residues: Holliday junction branch migration complex subunit RuvA (200 aa).

Residues 1–64 (MFAYFRGKLT…EDLLQLYGFS (64 aa)) are domain I. The segment at 65 to 143 (GEEERQLFRL…KLSPVSALAS (79 aa)) is domain II. Positions 144-154 (PARLSSTLLRD) are flexible linker. The tract at residues 154–200 (DDAVNALVTLGFSRIIVQKAVVAILEQNPGLTVEEVIKAALVSIHNS) is domain III.

Belongs to the RuvA family. Homotetramer. Forms an RuvA(8)-RuvB(12)-Holliday junction (HJ) complex. HJ DNA is sandwiched between 2 RuvA tetramers; dsDNA enters through RuvA and exits via RuvB. An RuvB hexamer assembles on each DNA strand where it exits the tetramer. Each RuvB hexamer is contacted by two RuvA subunits (via domain III) on 2 adjacent RuvB subunits; this complex drives branch migration. In the full resolvosome a probable DNA-RuvA(4)-RuvB(12)-RuvC(2) complex forms which resolves the HJ.

The protein resides in the cytoplasm. Its function is as follows. The RuvA-RuvB-RuvC complex processes Holliday junction (HJ) DNA during genetic recombination and DNA repair, while the RuvA-RuvB complex plays an important role in the rescue of blocked DNA replication forks via replication fork reversal (RFR). RuvA specifically binds to HJ cruciform DNA, conferring on it an open structure. The RuvB hexamer acts as an ATP-dependent pump, pulling dsDNA into and through the RuvAB complex. HJ branch migration allows RuvC to scan DNA until it finds its consensus sequence, where it cleaves and resolves the cruciform DNA. The chain is Holliday junction branch migration complex subunit RuvA from Pelodictyon phaeoclathratiforme (strain DSM 5477 / BU-1).